We begin with the raw amino-acid sequence, 112 residues long: Transcriptional regulator ClgR (112 aa).

The 55-residue stretch at 13 to 67 (LRGARMSQGRTLREVSDSARVSLGYLSEIERGRKEPSSELLSAICTALQLPLSVV) folds into the HTH cro/C1-type domain. The H-T-H motif DNA-binding region spans 24 to 43 (LREVSDSARVSLGYLSEIER).

Its function is as follows. Key stress-response regulator that plays an important role in multiple regulatory networks in response to different stress conditions. Required to manage host-derived stress during infection. Plays a role during hypoxia and reaeration. Controls the expression of many genes involved in heat shock, virulence, lipid metabolism, transport or regulation, including clpP1, clpP2, clpC1, hsp, groES, otsA, pknD, prcA and prcB. May function by protecting intracellular redox potential and by inducing the expression of trehalose, a constituent of cell walls that is important for defense against cell-surface and oxidative stress. Also performs different functions during stress response and is important for the pathogenicity of M.tuberculosis in vivo, regardless of the induction of the Clp proteolytic pathway. May directly activate SigE and/or SigH. This Mycobacterium tuberculosis (strain CDC 1551 / Oshkosh) protein is Transcriptional regulator ClgR (clgR).